We begin with the raw amino-acid sequence, 103 residues long: MSMLQQVSVAKKANVYFNGKVISRSVVLADGSKQTFGVVLPGEYEFSTAQGEIMQVISGKFDVLLPGKTEWVAYAEASQFELAPNVSFSIRTDQISEYCCQYI.

This sequence belongs to the nucleoside phosphorylase PpnP family.

It catalyses the reaction a purine D-ribonucleoside + phosphate = a purine nucleobase + alpha-D-ribose 1-phosphate. It carries out the reaction adenosine + phosphate = alpha-D-ribose 1-phosphate + adenine. The enzyme catalyses cytidine + phosphate = cytosine + alpha-D-ribose 1-phosphate. The catalysed reaction is guanosine + phosphate = alpha-D-ribose 1-phosphate + guanine. It catalyses the reaction inosine + phosphate = alpha-D-ribose 1-phosphate + hypoxanthine. It carries out the reaction thymidine + phosphate = 2-deoxy-alpha-D-ribose 1-phosphate + thymine. The enzyme catalyses uridine + phosphate = alpha-D-ribose 1-phosphate + uracil. The catalysed reaction is xanthosine + phosphate = alpha-D-ribose 1-phosphate + xanthine. Functionally, catalyzes the phosphorolysis of diverse nucleosides, yielding D-ribose 1-phosphate and the respective free bases. Can use uridine, adenosine, guanosine, cytidine, thymidine, inosine and xanthosine as substrates. Also catalyzes the reverse reactions. This Shewanella frigidimarina (strain NCIMB 400) protein is Pyrimidine/purine nucleoside phosphorylase.